Consider the following 189-residue polypeptide: MSGIFIAIILLTILALLFGILLGFAAEKFKVEGDPLVDQLEALLPQTQCGQCGYPGCRPYAEAIANGEKINLCPPGGSATMEKLAEMAGVEPEPLSATEEVQVKKVAYIREEECIGCTKCIQACPVDAILGSGKLMHTVITDYCTGCDLCVAPCPVDCIDMLPVEQTVKNWDWKLNAIPVKTLDEDCQC.

Positions 1 to 26 (MSGIFIAIILLTILALLFGILLGFAA) are hydrophobic. Residues 32–90 (EGDPLVDQLEALLPQTQCGQCGYPGCRPYAEAIANGEKINLCPPGGSATMEKLAEMAGV) enclose the 4Fe-4S domain. The [4Fe-4S] cluster site is built by Cys-49, Cys-52, Cys-57, Cys-73, Cys-114, Cys-117, Cys-120, Cys-124, Cys-144, Cys-147, Cys-150, and Cys-154. 4Fe-4S ferredoxin-type domains are found at residues 105-134 (KVAY…GSGK) and 135-164 (LMHT…MLPV).

Belongs to the 4Fe4S bacterial-type ferredoxin family. RnfB subfamily. In terms of assembly, the complex is composed of six subunits: RnfA, RnfB, RnfC, RnfD, RnfE and RnfG. It depends on [4Fe-4S] cluster as a cofactor.

The protein resides in the cell inner membrane. Functionally, part of a membrane-bound complex that couples electron transfer with translocation of ions across the membrane. The polypeptide is Ion-translocating oxidoreductase complex subunit B (Shewanella sediminis (strain HAW-EB3)).